Consider the following 281-residue polypeptide: Protein-S-isoprenylcysteine O-methyltransferase (281 aa).

The Cytoplasmic portion of the chain corresponds to Met-1–Leu-2. A helical transmembrane segment spans residues Ser-3–Tyr-29. Residues Tyr-30–Leu-35 lie on the Lumenal side of the membrane. A helical transmembrane segment spans residues Val-36 to Leu-53. The Cytoplasmic portion of the chain corresponds to Lys-54–Asn-58. A helical transmembrane segment spans residues Glu-59–Ala-85. Residues Pro-86–Asn-88 are Lumenal-facing. The helical transmembrane segment at Ile-89–Val-113 threads the bilayer. Residues Gln-114–Val-118 lie on the Cytoplasmic side of the membrane. Residues Ser-119–Phe-149 traverse the membrane as a helical segment. Topologically, residues Pro-150–Ile-155 are lumenal. Residues His-156 to Gly-181 traverse the membrane as a helical segment. At Ser-182–Arg-208 the chain is on the cytoplasmic side. Residues Gln-189, His-196–Val-199, Tyr-204, and His-209–Tyr-212 contribute to the S-adenosyl-L-methionine site. The chain crosses the membrane as a helical span at residues His-209 to Leu-226. At Ile-227–Pro-229 the chain is on the lumenal side. The chain crosses the membrane as a helical span at residues Leu-230–Phe-243. The Cytoplasmic segment spans residues Lys-244–Ile-281. Arg-246 serves as a coordination point for substrate. Residue Glu-250 coordinates S-adenosyl-L-methionine.

Belongs to the class VI-like SAM-binding methyltransferase superfamily. Isoprenylcysteine carboxyl methyltransferase family.

It is found in the endoplasmic reticulum membrane. The enzyme catalyses [protein]-C-terminal S-[(2E,6E)-farnesyl]-L-cysteine + S-adenosyl-L-methionine = [protein]-C-terminal S-[(2E,6E)-farnesyl]-L-cysteine methyl ester + S-adenosyl-L-homocysteine. Its function is as follows. Catalyzes the post-translational methylation of isoprenylated C-terminal cysteine residues. The chain is Protein-S-isoprenylcysteine O-methyltransferase from Tribolium castaneum (Red flour beetle).